We begin with the raw amino-acid sequence, 49 residues long: Osteocalcin (49 aa).

In terms of domain architecture, Gla spans 1–47 (YLYQWLGAPAPYPDPLEPKREVCELNPDCDELADHIGFQEAYRRFYG). Pro-9 carries the post-translational modification 4-hydroxyproline. Ca(2+)-binding residues include Glu-17, Glu-21, Glu-24, and Asp-30. 4-carboxyglutamate occurs at positions 17, 21, and 24. Cys-23 and Cys-29 are oxidised to a cystine.

This sequence belongs to the osteocalcin/matrix Gla protein family. In terms of processing, gamma-carboxyglutamate residues are formed by vitamin K dependent carboxylation by GGCX. These residues are essential for the binding of calcium. Decarboxylation promotes the hormone activity.

It localises to the secreted. The carboxylated form is one of the main organic components of the bone matrix, which constitutes 1-2% of the total bone protein: it acts as a negative regulator of bone formation and is required to limit bone formation without impairing bone resorption or mineralization. The carboxylated form binds strongly to apatite and calcium. In terms of biological role, the uncarboxylated form acts as a hormone secreted by osteoblasts, which regulates different cellular processes, such as energy metabolism, male fertility and brain development. Regulates of energy metabolism by acting as a hormone favoring pancreatic beta-cell proliferation, insulin secretion and sensitivity and energy expenditure. Uncarboxylated osteocalcin hormone also promotes testosterone production in the testes: acts as a ligand for G protein-coupled receptor GPRC6A at the surface of Leydig cells, initiating a signaling response that promotes the expression of enzymes required for testosterone synthesis in a CREB-dependent manner. Also acts as a regulator of brain development: osteocalcin hormone crosses the blood-brain barrier and acts as a ligand for GPR158 on neurons, initiating a signaling response that prevents neuronal apoptosis in the hippocampus, favors the synthesis of all monoamine neurotransmitters and inhibits that of gamma-aminobutyric acid (GABA). Osteocalcin also crosses the placenta during pregnancy and maternal osteocalcin is required for fetal brain development. This chain is Osteocalcin (BGLAP), found in Macaca fascicularis (Crab-eating macaque).